Reading from the N-terminus, the 151-residue chain is Putative phosphatidylglycerol/phosphatidylinositol transfer protein 1 (151 aa).

An N-terminal signal peptide occupies residues 1–26 (MKHSKNQIVYITFFIIILIVVKPIES).

It belongs to the NPC2 family. Monomer.

Functionally, catalyzes the intermembrane transfer of phosphatidylglycerol and phosphatidylinositol. This Dictyostelium discoideum (Social amoeba) protein is Putative phosphatidylglycerol/phosphatidylinositol transfer protein 1.